The sequence spans 438 residues: Polycomb protein eed-A (438 aa).

A disordered region spans residues 1–67 (MSEASGRAAG…NAPGRKAWGK (67 aa)). Positions 40 to 57 (SIESGTNTERPDTPTNAA) are enriched in polar residues. WD repeat units lie at residues 88–131 (DHNQ…DIRL), 139–182 (DADE…CIKH), 185–225 (GHGN…LVAI), 231–270 (GHRDEVLSADYDLLGEKIMSCGMDHSLKLWRINSLRMKTA), 301–338 (IHRNYVDCVRWLGDLILSKSCENAIVCWKPGKMEDDID), 356–396 (SQCD…PHKA), and 405–438 (KCASAVRQTSFSRDSSILVAVCDDATIWRWDRLR).

Belongs to the WD repeat ESC family. In terms of assembly, component of the prc2/eed-ezh2 complex. Interacts with yy1. Can interact with ezh2, hdac1 and taf9.

Its subcellular location is the nucleus. Polycomb group (PcG) protein. Component of the prc2/eed-ezh2 complex, which methylates 'Lys-9' and 'Lys-27' of histone H3, leading to transcriptional repression of the affected target gene. The chain is Polycomb protein eed-A (eed-a) from Xenopus laevis (African clawed frog).